The chain runs to 130 residues: Small ribosomal subunit protein uS8 (130 aa).

It belongs to the universal ribosomal protein uS8 family. Part of the 30S ribosomal subunit. Contacts proteins S5 and S12.

Functionally, one of the primary rRNA binding proteins, it binds directly to 16S rRNA central domain where it helps coordinate assembly of the platform of the 30S subunit. The protein is Small ribosomal subunit protein uS8 of Shewanella denitrificans (strain OS217 / ATCC BAA-1090 / DSM 15013).